The chain runs to 583 residues: Threonine--tRNA ligase (583 aa).

A catalytic region spans residues 185–478 (DHRKLGRELN…LVEHYGGAFP (294 aa)). Zn(2+)-binding residues include Cys278, His329, and His455.

Belongs to the class-II aminoacyl-tRNA synthetase family. Homodimer. Zn(2+) is required as a cofactor.

The protein resides in the cytoplasm. It carries out the reaction tRNA(Thr) + L-threonine + ATP = L-threonyl-tRNA(Thr) + AMP + diphosphate + H(+). Its function is as follows. Catalyzes the attachment of threonine to tRNA(Thr) in a two-step reaction: L-threonine is first activated by ATP to form Thr-AMP and then transferred to the acceptor end of tRNA(Thr). Also edits incorrectly charged L-seryl-tRNA(Thr). In Borrelia duttonii (strain Ly), this protein is Threonine--tRNA ligase.